Reading from the N-terminus, the 656-residue chain is Protein sly1 homolog (656 aa).

4 consecutive repeat copies span residues 85–121, 203–245, 419–456, and 460–496. Residues 85–496 are 4 X approximate repeats; sequence DENLDRIQQD…QATQYEGGGT (412 aa).

The protein belongs to the STXBP/unc-18/SEC1 family.

The protein localises to the cytoplasm. It localises to the membrane. Functionally, non-vital for development. The sequence is that of Protein sly1 homolog (Slh) from Drosophila virilis (Fruit fly).